A 214-amino-acid chain; its full sequence is Non-structural protein NP-1 (214 aa).

Disordered stretches follow at residues 1 to 85 (MSSE…TRTN) and 192 to 214 (ESEE…NASN). Basic residues predominate over residues 33–43 (SRSRSPIRRHG). Residues 44 to 55 (EKNLEYAHHNNQ) show a composition bias toward basic and acidic residues. Over residues 56-71 (DNRQSSYTASKTSDQA) the composition is skewed to polar residues. The span at 192 to 201 (ESEEVTDEEM) shows a compositional bias: acidic residues.

The protein belongs to the Bocaparvovirus Non-structural protein NP-1 family.

Its subcellular location is the host nucleus. In terms of biological role, required for the expression of the capsid proteins. Performs the splicing and internal polyadenylation of the viral capsid-encoding mRNA precursor, which allows its maturation and expression. Transactivates the viral promoter. This Human bocavirus 4 (HBoV4) protein is Non-structural protein NP-1 (NP1).